A 79-amino-acid chain; its full sequence is Acyl carrier protein (79 aa).

The region spanning 2–77 (SDIEARVKKI…NAIDYANTHH (76 aa)) is the Carrier domain. Ser37 carries the O-(pantetheine 4'-phosphoryl)serine modification.

This sequence belongs to the acyl carrier protein (ACP) family. 4'-phosphopantetheine is transferred from CoA to a specific serine of apo-ACP by AcpS. This modification is essential for activity because fatty acids are bound in thioester linkage to the sulfhydryl of the prosthetic group.

Its subcellular location is the cytoplasm. The protein operates within lipid metabolism; fatty acid biosynthesis. Its function is as follows. Carrier of the growing fatty acid chain in fatty acid biosynthesis. This Polaromonas naphthalenivorans (strain CJ2) protein is Acyl carrier protein.